A 350-amino-acid polypeptide reads, in one-letter code: Probable dTDP-glucose 4,6-dehydratase (350 aa).

Residue 7–13 (GGAGFIG) coordinates NAD(+). Position 132 (T132) interacts with substrate. The Proton donor role is filled by D133. Catalysis depends on proton acceptor residues E134 and Y157.

The protein belongs to the NAD(P)-dependent epimerase/dehydratase family. dTDP-glucose dehydratase subfamily. NAD(+) serves as cofactor.

The enzyme catalyses dTDP-alpha-D-glucose = dTDP-4-dehydro-6-deoxy-alpha-D-glucose + H2O. The protein operates within carbohydrate biosynthesis; dTDP-L-rhamnose biosynthesis. This is Probable dTDP-glucose 4,6-dehydratase from Sinorhizobium fredii (strain NBRC 101917 / NGR234).